Here is a 458-residue protein sequence, read N- to C-terminus: UDP-N-acetylmuramoylalanine--D-glutamate ligase (458 aa).

ATP is bound at residue 124-130 (GSDGKTT).

This sequence belongs to the MurCDEF family.

It localises to the cytoplasm. The enzyme catalyses UDP-N-acetyl-alpha-D-muramoyl-L-alanine + D-glutamate + ATP = UDP-N-acetyl-alpha-D-muramoyl-L-alanyl-D-glutamate + ADP + phosphate + H(+). The protein operates within cell wall biogenesis; peptidoglycan biosynthesis. Cell wall formation. Catalyzes the addition of glutamate to the nucleotide precursor UDP-N-acetylmuramoyl-L-alanine (UMA). This Clostridium botulinum (strain Langeland / NCTC 10281 / Type F) protein is UDP-N-acetylmuramoylalanine--D-glutamate ligase.